The primary structure comprises 227 residues: UPF0173 metal-dependent hydrolase BCE33L4354 (227 aa).

Belongs to the UPF0173 family.

This chain is UPF0173 metal-dependent hydrolase BCE33L4354, found in Bacillus cereus (strain ZK / E33L).